Consider the following 510-residue polypeptide: Lysine--tRNA ligase (510 aa).

Residues E420 and E427 each contribute to the Mg(2+) site.

It belongs to the class-II aminoacyl-tRNA synthetase family. As to quaternary structure, homodimer. Mg(2+) serves as cofactor.

It is found in the cytoplasm. It carries out the reaction tRNA(Lys) + L-lysine + ATP = L-lysyl-tRNA(Lys) + AMP + diphosphate. This is Lysine--tRNA ligase from Vibrio vulnificus (strain CMCP6).